The following is a 520-amino-acid chain: GMP synthase [glutamine-hydrolyzing] (520 aa).

The 194-residue stretch at 9–202 folds into the Glutamine amidotransferase type-1 domain; it reads KILILDFGSQ…VRAICGCTGH (194 aa). Residue cysteine 86 is the Nucleophile of the active site. Active-site residues include histidine 176 and glutamate 178. One can recognise a GMPS ATP-PPase domain in the interval 203-395; sequence WTPGQIIEDA…LGLPHQMVWR (193 aa). Residue 230–236 coordinates ATP; it reads SGGVDSS.

In terms of assembly, homodimer.

The enzyme catalyses XMP + L-glutamine + ATP + H2O = GMP + L-glutamate + AMP + diphosphate + 2 H(+). It participates in purine metabolism; GMP biosynthesis; GMP from XMP (L-Gln route): step 1/1. Functionally, catalyzes the synthesis of GMP from XMP. The sequence is that of GMP synthase [glutamine-hydrolyzing] from Pelobacter propionicus (strain DSM 2379 / NBRC 103807 / OttBd1).